A 105-amino-acid polypeptide reads, in one-letter code: Large ribosomal subunit protein uL24 (105 aa).

It belongs to the universal ribosomal protein uL24 family. Part of the 50S ribosomal subunit.

One of two assembly initiator proteins, it binds directly to the 5'-end of the 23S rRNA, where it nucleates assembly of the 50S subunit. In terms of biological role, one of the proteins that surrounds the polypeptide exit tunnel on the outside of the subunit. This Beijerinckia indica subsp. indica (strain ATCC 9039 / DSM 1715 / NCIMB 8712) protein is Large ribosomal subunit protein uL24.